Reading from the N-terminus, the 466-residue chain is 3-isopropylmalate dehydratase large subunit (466 aa).

[4Fe-4S] cluster-binding residues include Cys-347, Cys-407, and Cys-410.

This sequence belongs to the aconitase/IPM isomerase family. LeuC type 1 subfamily. In terms of assembly, heterodimer of LeuC and LeuD. [4Fe-4S] cluster is required as a cofactor.

The catalysed reaction is (2R,3S)-3-isopropylmalate = (2S)-2-isopropylmalate. The protein operates within amino-acid biosynthesis; L-leucine biosynthesis; L-leucine from 3-methyl-2-oxobutanoate: step 2/4. Its function is as follows. Catalyzes the isomerization between 2-isopropylmalate and 3-isopropylmalate, via the formation of 2-isopropylmaleate. The protein is 3-isopropylmalate dehydratase large subunit of Escherichia coli O9:H4 (strain HS).